Here is a 199-residue protein sequence, read N- to C-terminus: Cytochrome c oxidase subunit 2 (199 aa).

Residues 1–13 traverse the membrane as a helical segment; it reads AICSLVLYLLTLM. The Mitochondrial matrix segment spans residues 14–26; the sequence is LMEKLSSNTVDAQ. Residues 27–54 traverse the membrane as a helical segment; that stretch reads EVELIWTILPAIVLILLALPSLQILYMM. The Mitochondrial intermembrane portion of the chain corresponds to 55–199; sequence DEIDEPDLTL…SSLLSISSSL (145 aa). H128, C163, E165, C167, H171, and M174 together coordinate Cu cation. Residue E165 participates in Mg(2+) binding.

Belongs to the cytochrome c oxidase subunit 2 family. As to quaternary structure, component of the cytochrome c oxidase (complex IV, CIV), a multisubunit enzyme composed of 14 subunits. The complex is composed of a catalytic core of 3 subunits MT-CO1, MT-CO2 and MT-CO3, encoded in the mitochondrial DNA, and 11 supernumerary subunits COX4I, COX5A, COX5B, COX6A, COX6B, COX6C, COX7A, COX7B, COX7C, COX8 and NDUFA4, which are encoded in the nuclear genome. The complex exists as a monomer or a dimer and forms supercomplexes (SCs) in the inner mitochondrial membrane with NADH-ubiquinone oxidoreductase (complex I, CI) and ubiquinol-cytochrome c oxidoreductase (cytochrome b-c1 complex, complex III, CIII), resulting in different assemblies (supercomplex SCI(1)III(2)IV(1) and megacomplex MCI(2)III(2)IV(2)). Found in a complex with TMEM177, COA6, COX18, COX20, SCO1 and SCO2. Interacts with TMEM177 in a COX20-dependent manner. Interacts with COX20. Interacts with COX16. Requires Cu cation as cofactor.

The protein resides in the mitochondrion inner membrane. It catalyses the reaction 4 Fe(II)-[cytochrome c] + O2 + 8 H(+)(in) = 4 Fe(III)-[cytochrome c] + 2 H2O + 4 H(+)(out). Functionally, component of the cytochrome c oxidase, the last enzyme in the mitochondrial electron transport chain which drives oxidative phosphorylation. The respiratory chain contains 3 multisubunit complexes succinate dehydrogenase (complex II, CII), ubiquinol-cytochrome c oxidoreductase (cytochrome b-c1 complex, complex III, CIII) and cytochrome c oxidase (complex IV, CIV), that cooperate to transfer electrons derived from NADH and succinate to molecular oxygen, creating an electrochemical gradient over the inner membrane that drives transmembrane transport and the ATP synthase. Cytochrome c oxidase is the component of the respiratory chain that catalyzes the reduction of oxygen to water. Electrons originating from reduced cytochrome c in the intermembrane space (IMS) are transferred via the dinuclear copper A center (CU(A)) of subunit 2 and heme A of subunit 1 to the active site in subunit 1, a binuclear center (BNC) formed by heme A3 and copper B (CU(B)). The BNC reduces molecular oxygen to 2 water molecules using 4 electrons from cytochrome c in the IMS and 4 protons from the mitochondrial matrix. This is Cytochrome c oxidase subunit 2 (MT-CO2) from Casuarius bennetti (Dwarf cassowary).